A 113-amino-acid chain; its full sequence is MKLLTTICRLKLEKMYSKTNTSSTIFEKARHGTEKISTARSEGHHITFSRWKSCTAIGGRCKNQCDDSEFRISYCARPTTHCCVTECDPTDPNNWIPKDSVGTQEWYPKDSRH.

3 cysteine pairs are disulfide-bonded: cysteine 54–cysteine 82, cysteine 61–cysteine 75, and cysteine 65–cysteine 83.

Belongs to the beta-defensin family.

Its subcellular location is the secreted. In terms of biological role, has antibacterial activity. This chain is Beta-defensin 112 (DEFB112), found in Homo sapiens (Human).